The chain runs to 424 residues: Calreticulin-2 (424 aa).

The first 22 residues, 1–22, serve as a signal peptide directing secretion; that stretch reads MAKMIPSLVSLILIGLVAIASA. N59 is a glycosylation site (N-linked (GlcNAc...) asparagine). C108 and C140 are disulfide-bonded. An alpha-D-glucoside contacts are provided by Y112, K114, Y131, and D138. Repeat copies occupy residues 194–205, 213–224, 230–241, 248–259, 263–273, 277–287, and 291–301. The 4 X approximate repeats stretch occupies residues 194–259; sequence KQTGSLYSDW…DSKKPEDWDD (66 aa). A compositionally biased stretch (basic and acidic residues) spans 210–220; sequence KIKDPSAKKPE. Positions 210-279 are disordered; that stretch reads KIKDPSAKKP…IPNPEYMGEW (70 aa). Over residues 221-230 the composition is skewed to acidic residues; sequence DWDEQEYISD. Residues 231-255 are compositionally biased toward basic and acidic residues; sequence PEDKKPDGYDDIPKEIPDTDSKKPE. Residues 263 to 301 form a 3 X approximate repeats region; sequence GEWTAPTIPNPEYMGEWKPKQIKNPNYKGKWEAPLIDNP. E321 lines the an alpha-D-glucoside pocket. Positions 362-378 are enriched in basic and acidic residues; sequence FDEAEKKNEEEESKDAP. The segment at 362–424 is disordered; it reads FDEAEKKNEE…EKDATAHDEL (63 aa). Positions 379–397 are enriched in acidic residues; that stretch reads AESDAEDEPEDDEGGDDSD. A phosphoserine mark is found at S381 and S396. Basic and acidic residues predominate over residues 398–424; it reads SESKAEETKSVDSEETSEKDATAHDEL. The short motif at 421–424 is the Prevents secretion from ER element; sequence HDEL.

This sequence belongs to the calreticulin family.

It localises to the endoplasmic reticulum lumen. In terms of biological role, molecular calcium-binding chaperone promoting folding, oligomeric assembly and quality control in the ER via the calreticulin/calnexin cycle. This lectin may interact transiently with almost all of the monoglucosylated glycoproteins that are synthesized in the ER. This chain is Calreticulin-2 (CRT2), found in Arabidopsis thaliana (Mouse-ear cress).